The following is a 359-amino-acid chain: 3-dehydroquinate synthase (359 aa).

NAD(+) contacts are provided by residues 70-75 (DGEQYK), 105-109 (GVIGD), 129-130 (TT), Lys142, Lys151, and 169-172 (FYKT). Residues Glu184, His247, and His264 each contribute to the Zn(2+) site.

It belongs to the sugar phosphate cyclases superfamily. Dehydroquinate synthase family. Co(2+) serves as cofactor. Requires Zn(2+) as cofactor. It depends on NAD(+) as a cofactor.

It localises to the cytoplasm. The catalysed reaction is 7-phospho-2-dehydro-3-deoxy-D-arabino-heptonate = 3-dehydroquinate + phosphate. It participates in metabolic intermediate biosynthesis; chorismate biosynthesis; chorismate from D-erythrose 4-phosphate and phosphoenolpyruvate: step 2/7. Its function is as follows. Catalyzes the conversion of 3-deoxy-D-arabino-heptulosonate 7-phosphate (DAHP) to dehydroquinate (DHQ). The chain is 3-dehydroquinate synthase from Francisella tularensis subsp. holarctica (strain FTNF002-00 / FTA).